The primary structure comprises 384 residues: Dual-specificity RNA methyltransferase RlmN (384 aa).

The Proton acceptor role is filled by Glu-105. Residues 111–350 (EDDRATLCVS…TIVRKTRGDD (240 aa)) enclose the Radical SAM core domain. A disulfide bridge links Cys-118 with Cys-355. [4Fe-4S] cluster is bound by residues Cys-125, Cys-129, and Cys-132. S-adenosyl-L-methionine contacts are provided by residues 179–180 (GE), Ser-211, 233–235 (SLH), and Asn-312. Cys-355 serves as the catalytic S-methylcysteine intermediate.

Belongs to the radical SAM superfamily. RlmN family. [4Fe-4S] cluster serves as cofactor.

Its subcellular location is the cytoplasm. It catalyses the reaction adenosine(2503) in 23S rRNA + 2 reduced [2Fe-2S]-[ferredoxin] + 2 S-adenosyl-L-methionine = 2-methyladenosine(2503) in 23S rRNA + 5'-deoxyadenosine + L-methionine + 2 oxidized [2Fe-2S]-[ferredoxin] + S-adenosyl-L-homocysteine. The enzyme catalyses adenosine(37) in tRNA + 2 reduced [2Fe-2S]-[ferredoxin] + 2 S-adenosyl-L-methionine = 2-methyladenosine(37) in tRNA + 5'-deoxyadenosine + L-methionine + 2 oxidized [2Fe-2S]-[ferredoxin] + S-adenosyl-L-homocysteine. Specifically methylates position 2 of adenine 2503 in 23S rRNA and position 2 of adenine 37 in tRNAs. m2A2503 modification seems to play a crucial role in the proofreading step occurring at the peptidyl transferase center and thus would serve to optimize ribosomal fidelity. The sequence is that of Dual-specificity RNA methyltransferase RlmN from Shigella flexneri serotype 5b (strain 8401).